Here is a 785-residue protein sequence, read N- to C-terminus: uncharacterized protein (785 aa).

The DOD-type homing endonuclease domain maps to 293–421 (LVGYFLSEGY…LRLISLRLGF (129 aa)).

This protein undergoes a protein self splicing that involves a post-translational excision of the intervening region (intein) followed by peptide ligation.

This is an uncharacterized protein from Methanocaldococcus jannaschii (strain ATCC 43067 / DSM 2661 / JAL-1 / JCM 10045 / NBRC 100440) (Methanococcus jannaschii).